We begin with the raw amino-acid sequence, 337 residues long: Trace amine-associated receptor 5 (337 aa).

The Extracellular portion of the chain corresponds to 1 to 38 (MRAVLLPGSGEQPTAFCYQVNGSCPRTVHPLAIQVVIY). A glycan (N-linked (GlcNAc...) asparagine) is linked at Asn-21. 2 disulfides stabilise this stretch: Cys-24-Cys-188 and Cys-99-Cys-192. Residues 39–59 (LACAVGVLITVLGNLFVVFAV) form a helical membrane-spanning segment. Residues 60 to 70 (SYFKVLHTPTN) are Cytoplasmic-facing. A helical transmembrane segment spans residues 71-91 (FLLLSLALADMLLGLLVLPLS). The Extracellular segment spans residues 92 to 109 (TVRSVESCWFFGDFLCRL). The chain crosses the membrane as a helical span at residues 110 to 130 (HTYLDTLFCLTSIFHLCFISI). Over 131 to 154 (DRHCAICDPLLYPSKFTVRTALRY) the chain is Cytoplasmic. Residues 155-175 (IVAGWGIPAAYTAFFLYTDVV) form a helical membrane-spanning segment. The extracellular Loop 2 (ECL2) stretch occupies residues 176–189 (ERALSQWLEEMPCV). At 176-204 (ERALSQWLEEMPCVGSCQLLFNKFWGWLN) the chain is on the extracellular side. A helical membrane pass occupies residues 205–225 (FPAFFVPCLIMISLYLKIFVV). Residues 226–253 (ATRQAQQIRTLSQSLAGAVKRERKAAKT) are Cytoplasmic-facing. Residues 254-274 (LGIAVGIYLVCWLPFTVDTLV) traverse the membrane as a helical segment. The Extracellular portion of the chain corresponds to 275-284 (DSLLNFITPP). The chain crosses the membrane as a helical span at residues 285 to 307 (LVFDIFIWFAYFNSACNPIIYVF). The Cytoplasmic portion of the chain corresponds to 308–337 (SYRWFRKALKLLLSREIFSPRTPTVDLYHD).

This sequence belongs to the G-protein coupled receptor 1 family. As to expression, specifically expressed in neurons of the olfactory epithelium, to discrete glomeruli predominantly localized to a confined bulb region. Present in the dorsal area of the main olfactory epithelium. Also present in the limbic brain areas receiving projection from the olfactory system and involved in the regulation of emotions. Also expressed in some brain regions outside the olfactory epithelium, such as the hippocampus, cerebellum, cortex, raphe nuclei, hypothalamus, and habenula.

It is found in the cell membrane. Inhibited by 1-[(5,5- diphenyloxolan-2-yl)methyl]-4-(2-methoxyphenyl)piperazine and N-[(2,2-diphenyl-1,3-dioxolan-4-yl)methyl]-2-(2- methoxyphenoxy)ethan-1-amine small molecules. Functionally, olfactory receptor specific for trimethylamine, a trace amine enriched in the urine of male mice, playing a role in social behavior. Also activated by N-methylpiperidine. Trimethylamine is present at high concentration in the urine of male mice after puberty and acts as an attractant. Trimethylamine-binding causes a conformation change that triggers signaling via G(s)-class of G alpha proteins (GNAL or GNAS). Also required to provide olfactory input into limbic brain areas to regulate emotional behaviors likely via modulation of the serotonin system. In Mus musculus (Mouse), this protein is Trace amine-associated receptor 5.